We begin with the raw amino-acid sequence, 504 residues long: Pentatricopeptide repeat-containing protein At5g16640, mitochondrial (504 aa).

Residues 1 to 43 constitute a mitochondrion transit peptide; the sequence is MRRSISSKAKSFLHRNLLYSGNSGTSPSSSFSICGFCFSRRAY. PPR repeat units follow at residues 45 to 79, 80 to 114, 115 to 149, 150 to 184, 185 to 219, 220 to 254, 255 to 289, 290 to 324, 325 to 359, 360 to 394, 395 to 429, 430 to 464, and 465 to 499; these read NGSDYREMLRNGIRFMKLDDSLDLFFHMVQCRPLP, SIADFSRLLSAISKMKKYDVVIYLWEQMQMLGIPH, NLCTCNILLNCFCRCSQLSLALSFLGKMIKLGHEP, SIVTFGSLLNGFCRGDRVYDALYMFDQMVGMGYKP, NVVIYNTIIDGLCKSKQVDNALDLLNRMEKDGIGP, DVVTYNSLISGLCSSGRWSDATRMVSCMTKREIYP, DVFTFNALIDACVKEGRVSEAEEFYEEMIRRSLDP, DIVTYSLLIYGLCMYSRLDEAEEMFGFMVSKGCFP, DVVTYSILINGYCKSKKVEHGMKLFCEMSQRGVVR, NTVTYTILIQGYCRAGKLNVAEEIFRRMVFCGVHP, NIITYNVLLHGLCDNGKIEKALVILADMQKNGMDA, DIVTYNIIIRGMCKAGEVADAWDIYCSLNCQGLMP, and DIWTYTTMMLGLYKKGLRREADALFRKMKEDGILP.

The protein belongs to the PPR family. P subfamily.

The protein resides in the mitochondrion. The chain is Pentatricopeptide repeat-containing protein At5g16640, mitochondrial from Arabidopsis thaliana (Mouse-ear cress).